A 40-amino-acid polypeptide reads, in one-letter code: Photosystem II reaction center protein J (40 aa).

Residues 8 to 28 (IPLWLIGTVTGIPVIGLVGIF) form a helical membrane-spanning segment.

This sequence belongs to the PsbJ family. PSII is composed of 1 copy each of membrane proteins PsbA, PsbB, PsbC, PsbD, PsbE, PsbF, PsbH, PsbI, PsbJ, PsbK, PsbL, PsbM, PsbT, PsbX, PsbY, PsbZ, Psb30/Ycf12, at least 3 peripheral proteins of the oxygen-evolving complex and a large number of cofactors. It forms dimeric complexes.

Its subcellular location is the plastid. It is found in the chloroplast thylakoid membrane. In terms of biological role, one of the components of the core complex of photosystem II (PSII). PSII is a light-driven water:plastoquinone oxidoreductase that uses light energy to abstract electrons from H(2)O, generating O(2) and a proton gradient subsequently used for ATP formation. It consists of a core antenna complex that captures photons, and an electron transfer chain that converts photonic excitation into a charge separation. The sequence is that of Photosystem II reaction center protein J from Cucumis sativus (Cucumber).